The primary structure comprises 315 residues: Putative glycosyltransferase ORF315 (315 aa).

It belongs to the glycosyltransferase group 1 family. Glycosyltransferase 4 subfamily.

The sequence is that of Putative glycosyltransferase ORF315 from Acidianus convivator (ABV).